Here is a 260-residue protein sequence, read N- to C-terminus: Ubiquinone/menaquinone biosynthesis C-methyltransferase UbiE (260 aa).

S-adenosyl-L-methionine-binding positions include threonine 83, aspartate 104, and 132–133; that span reads NA.

This sequence belongs to the class I-like SAM-binding methyltransferase superfamily. MenG/UbiE family.

It catalyses the reaction a 2-demethylmenaquinol + S-adenosyl-L-methionine = a menaquinol + S-adenosyl-L-homocysteine + H(+). It carries out the reaction a 2-methoxy-6-(all-trans-polyprenyl)benzene-1,4-diol + S-adenosyl-L-methionine = a 5-methoxy-2-methyl-3-(all-trans-polyprenyl)benzene-1,4-diol + S-adenosyl-L-homocysteine + H(+). It participates in quinol/quinone metabolism; menaquinone biosynthesis; menaquinol from 1,4-dihydroxy-2-naphthoate: step 2/2. The protein operates within cofactor biosynthesis; ubiquinone biosynthesis. In terms of biological role, methyltransferase required for the conversion of demethylmenaquinol (DMKH2) to menaquinol (MKH2) and the conversion of 2-polyprenyl-6-methoxy-1,4-benzoquinol (DDMQH2) to 2-polyprenyl-3-methyl-6-methoxy-1,4-benzoquinol (DMQH2). This chain is Ubiquinone/menaquinone biosynthesis C-methyltransferase UbiE, found in Bartonella henselae (strain ATCC 49882 / DSM 28221 / CCUG 30454 / Houston 1) (Rochalimaea henselae).